The sequence spans 452 residues: MDVVILAAGLGTRMKSSKPKVLHRILEKPIIDYVIDCAKSLNPFNSFVVINPSLKEVAEHLEKYNIKIVFQDEPKGTAHALLSALPYLSSDKILILNGDTPLLRKETLDSFIELFNKNGLDMALLSFYPQREHSYGRILRDGEQKIKKIVEITDFKDELMLSSEANSGIYILKREVAELVKEIKQNPNKGEFYLTDIVEIAVNKGFNIEAYPLAEENELIGINTRAELSLAMRYLRDRIVKGWMEKGITFYDPALVWISPSVTIGQDTIIYPNVFLEGDTKIGQNCLICQGVRIKNSIIEDNVQINDCTVIENSHIKSASKIGPFAHLRPDSIIGKGCRIGNFVEVKNSTIGDGTKAAHLSYIGDSEIGNNVNIGAGTITCNYDGQKKHKTIIEDNVFIGSDTQLVAPVKICKGAYIGAGSTITKEVPEDSLAISRTPQKNILGWAKKKRKQ.

The segment at 1 to 225 (MDVVILAAGL…ENELIGINTR (225 aa)) is pyrophosphorylase. UDP-N-acetyl-alpha-D-glucosamine contacts are provided by residues 6 to 9 (LAAG), lysine 20, glutamine 71, and 76 to 77 (GT). Residue aspartate 99 coordinates Mg(2+). The UDP-N-acetyl-alpha-D-glucosamine site is built by glycine 136, glutamate 151, asparagine 166, and asparagine 223. Mg(2+) is bound at residue asparagine 223. The interval 226–246 (AELSLAMRYLRDRIVKGWMEK) is linker. Residues 247–452 (GITFYDPALV…LGWAKKKRKQ (206 aa)) are N-acetyltransferase. The UDP-N-acetyl-alpha-D-glucosamine site is built by arginine 329 and lysine 347. Histidine 359 acts as the Proton acceptor in catalysis. Tyrosine 362 and asparagine 373 together coordinate UDP-N-acetyl-alpha-D-glucosamine. Residues alanine 376, 382–383 (NY), serine 401, alanine 419, and arginine 436 contribute to the acetyl-CoA site.

In the N-terminal section; belongs to the N-acetylglucosamine-1-phosphate uridyltransferase family. The protein in the C-terminal section; belongs to the transferase hexapeptide repeat family. Homotrimer. It depends on Mg(2+) as a cofactor.

It is found in the cytoplasm. It catalyses the reaction alpha-D-glucosamine 1-phosphate + acetyl-CoA = N-acetyl-alpha-D-glucosamine 1-phosphate + CoA + H(+). The enzyme catalyses N-acetyl-alpha-D-glucosamine 1-phosphate + UTP + H(+) = UDP-N-acetyl-alpha-D-glucosamine + diphosphate. It participates in nucleotide-sugar biosynthesis; UDP-N-acetyl-alpha-D-glucosamine biosynthesis; N-acetyl-alpha-D-glucosamine 1-phosphate from alpha-D-glucosamine 6-phosphate (route II): step 2/2. Its pathway is nucleotide-sugar biosynthesis; UDP-N-acetyl-alpha-D-glucosamine biosynthesis; UDP-N-acetyl-alpha-D-glucosamine from N-acetyl-alpha-D-glucosamine 1-phosphate: step 1/1. It functions in the pathway bacterial outer membrane biogenesis; LPS lipid A biosynthesis. Its function is as follows. Catalyzes the last two sequential reactions in the de novo biosynthetic pathway for UDP-N-acetylglucosamine (UDP-GlcNAc). The C-terminal domain catalyzes the transfer of acetyl group from acetyl coenzyme A to glucosamine-1-phosphate (GlcN-1-P) to produce N-acetylglucosamine-1-phosphate (GlcNAc-1-P), which is converted into UDP-GlcNAc by the transfer of uridine 5-monophosphate (from uridine 5-triphosphate), a reaction catalyzed by the N-terminal domain. This chain is Bifunctional protein GlmU, found in Thermodesulfovibrio yellowstonii (strain ATCC 51303 / DSM 11347 / YP87).